Reading from the N-terminus, the 544-residue chain is Phenylalanine--tRNA ligase beta subunit (544 aa).

Residues 268 to 343 (LIHKIQNVRE…MSIGYNNLEP (76 aa)) form the B5 domain. Residues Asp-321, Asp-327, Glu-330, and Asp-331 each contribute to the Mg(2+) site.

The protein belongs to the phenylalanyl-tRNA synthetase beta subunit family. Type 2 subfamily. Tetramer of two alpha and two beta subunits. Mg(2+) serves as cofactor.

The protein localises to the cytoplasm. The enzyme catalyses tRNA(Phe) + L-phenylalanine + ATP = L-phenylalanyl-tRNA(Phe) + AMP + diphosphate + H(+). In Saccharolobus solfataricus (strain ATCC 35092 / DSM 1617 / JCM 11322 / P2) (Sulfolobus solfataricus), this protein is Phenylalanine--tRNA ligase beta subunit.